The chain runs to 155 residues: 6,7-dimethyl-8-ribityllumazine synthase (155 aa).

5-amino-6-(D-ribitylamino)uracil is bound by residues F23, 57 to 59 (AFE), and 81 to 83 (AVI). 86 to 87 (ST) serves as a coordination point for (2S)-2-hydroxy-3-oxobutyl phosphate. H89 serves as the catalytic Proton donor. F114 provides a ligand contact to 5-amino-6-(D-ribitylamino)uracil. Position 128 (R128) interacts with (2S)-2-hydroxy-3-oxobutyl phosphate.

The protein belongs to the DMRL synthase family.

It catalyses the reaction (2S)-2-hydroxy-3-oxobutyl phosphate + 5-amino-6-(D-ribitylamino)uracil = 6,7-dimethyl-8-(1-D-ribityl)lumazine + phosphate + 2 H2O + H(+). It functions in the pathway cofactor biosynthesis; riboflavin biosynthesis; riboflavin from 2-hydroxy-3-oxobutyl phosphate and 5-amino-6-(D-ribitylamino)uracil: step 1/2. Catalyzes the formation of 6,7-dimethyl-8-ribityllumazine by condensation of 5-amino-6-(D-ribitylamino)uracil with 3,4-dihydroxy-2-butanone 4-phosphate. This is the penultimate step in the biosynthesis of riboflavin. The chain is 6,7-dimethyl-8-ribityllumazine synthase from Geobacter metallireducens (strain ATCC 53774 / DSM 7210 / GS-15).